Consider the following 393-residue polypeptide: Phospho-N-acetylmuramoyl-pentapeptide-transferase (393 aa).

Transmembrane regions (helical) follow at residues 29–49 (RAVM…PWVI), 75–95 (TPTM…LLWF), 101–121 (FVWV…VDDW), 138–158 (YLWQ…SVSE), 194–214 (VSYP…IVGA), 226–246 (GLAI…AYVT), 263–283 (AGEL…FLWF), 290–310 (VFMG…IAVI), 315–335 (IVLG…MAQV), and 370–390 (QVVV…LSTL).

Belongs to the glycosyltransferase 4 family. MraY subfamily. Mg(2+) serves as cofactor.

It is found in the cell inner membrane. The enzyme catalyses UDP-N-acetyl-alpha-D-muramoyl-L-alanyl-gamma-D-glutamyl-meso-2,6-diaminopimeloyl-D-alanyl-D-alanine + di-trans,octa-cis-undecaprenyl phosphate = di-trans,octa-cis-undecaprenyl diphospho-N-acetyl-alpha-D-muramoyl-L-alanyl-D-glutamyl-meso-2,6-diaminopimeloyl-D-alanyl-D-alanine + UMP. It participates in cell wall biogenesis; peptidoglycan biosynthesis. In terms of biological role, catalyzes the initial step of the lipid cycle reactions in the biosynthesis of the cell wall peptidoglycan: transfers peptidoglycan precursor phospho-MurNAc-pentapeptide from UDP-MurNAc-pentapeptide onto the lipid carrier undecaprenyl phosphate, yielding undecaprenyl-pyrophosphoryl-MurNAc-pentapeptide, known as lipid I. The chain is Phospho-N-acetylmuramoyl-pentapeptide-transferase from Leptothrix cholodnii (strain ATCC 51168 / LMG 8142 / SP-6) (Leptothrix discophora (strain SP-6)).